Consider the following 421-residue polypeptide: AA11 family lytic polysaccharide monooxygenase (421 aa).

Residues 1–19 (MFSKAFLSAALLGAAAVEG) form the signal peptide. Residues His20, His79, and Glu93 each contribute to the Cu(+) site. Cystine bridges form between Cys48-Cys162, Cys84-Cys110, and Cys201-Cys235. The N-linked (GlcNAc...) asparagine glycan is linked to Asn117. The interval 231–349 (GSQACTGTPT…SSSSSSSGAL (119 aa)) is disordered. The span at 247–285 (TAGSSGSSGSSSGSSSGGSSSSAAGSGATAPPAPAVSST) shows a compositional bias: low complexity. A compositionally biased stretch (polar residues) spans 304–314 (SPAQPTHTSAP). The span at 315-349 (SGGSSSGSGSSSGSNSGSSSGSSSSSSSSSSSGAL) shows a compositional bias: low complexity.

It belongs to the polysaccharide monooxygenase AA11 family. Requires Cu(2+) as cofactor.

Functionally, lytic polysaccharide monooxygenase (LPMO) that depolymerizes chitin via the oxidation of scissile beta-(1-4)-glycosidic bonds, yielding C1 or C4 oxidation products. Catalysis by LPMOs requires the reduction of the active-site copper from Cu(II) to Cu(I) by a reducing agent and H(2)O(2) or O(2) as a cosubstrate. Active on chitin but has no activity on other substrates, including diverse mannans, cellulose and starch (data not shown). Primary chain cleavage yields predominantly aldonic acid oligosaccharides with even-numbered degrees of polymerization. This is AA11 family lytic polysaccharide monooxygenase from Aspergillus oryzae (strain ATCC 42149 / RIB 40) (Yellow koji mold).